The primary structure comprises 272 residues: Insulin-like growth factor-binding protein 1 (272 aa).

The first 25 residues, 1-25 (MPEVPAAGLWPFLLLLAVQVSTVAS), serve as a signal peptide directing secretion. The region spanning 28–109 (QPWHCAPCSA…TRGQGACVPE (82 aa)) is the IGFBP N-terminal domain. Disulfide bonds link Cys-32-Cys-59, Cys-35-Cys-61, Cys-43-Cys-62, Cys-50-Cys-65, and Cys-73-Cys-86. Ser-139, Ser-157, and Ser-169 each carry phosphoserine. Thr-170 is subject to Phosphothreonine. Residue Tyr-171 is modified to Phosphotyrosine. Residues 186-264 (KQPCRRELYK…SLEIRGDPNC (79 aa)) enclose the Thyroglobulin type-1 domain. Intrachain disulfides connect Cys-189–Cys-219, Cys-230–Cys-241, and Cys-243–Cys-264. The residue at position 255 (Ser-255) is a Phosphoserine. The short motif at 259–261 (RGD) is the Cell attachment site element.

In terms of assembly, binds equally well IGF1 and IGF2. Interacts with integrin ITGA5:ITGB1. Interacts with VHL; this interaction inhibits HIF1A degradation.

It localises to the secreted. In terms of biological role, multifunctional protein that plays a critical role in regulating the availability of IGFs such as IGF1 and IGF2 to their receptors and thereby regulates IGF-mediated cellular processes including cell migration, proliferation, differentiation or apoptosis in a cell-type specific manner. Also plays a positive role in cell migration by interacting with integrin ITGA5:ITGB1 through its RGD motif. Mechanistically, binding to integrins leads to activation of focal adhesion kinase/PTK2 and stimulation of the mitogen-activated protein kinase (MAPK) pathway. Regulates cardiomyocyte apoptosis by suppressing HIF-1alpha/HIF1A degradation through ubiquitination. The protein is Insulin-like growth factor-binding protein 1 (IGFBP1) of Ictidomys tridecemlineatus (Thirteen-lined ground squirrel).